Consider the following 591-residue polypeptide: Protein kinase C zeta type (591 aa).

The PB1 domain occupies 15 to 98; the sequence is RVRLKAHYSG…DGLILHVFPS (84 aa). Positions 79-145 are interaction with SQSTM1; that stretch reads AFRLAGQHRD…KRFNRRAYCG (67 aa). A Phorbol-ester/DAG-type zinc finger spans residues 130-180; it reads GHLFQAKRFNRRAYCGQCSERIWGLARQGYRCINCKLLVHKRCHGLVPLTC. One can recognise a Protein kinase domain in the interval 251 to 517; the sequence is FDLIRVIGRG…FSDIKSHAFF (267 aa). ATP is bound by residues 257-265 and lysine 280; that span reads IGRGSYAKV. Aspartate 375 (proton acceptor) is an active-site residue. Threonine 409 bears the Phosphothreonine; by PDPK1 and PI3K mark. Positions 518–589 constitute an AGC-kinase C-terminal domain; that stretch reads RSIDWDLLEK…INPLLLSTEE (72 aa). Residue threonine 559 is modified to Phosphothreonine. Residue serine 590 is modified to Phosphoserine.

Belongs to the protein kinase superfamily. AGC Ser/Thr protein kinase family. PKC subfamily. As to quaternary structure, interacts with PARD6A, PARD6B and PARD6G. Part of a complex with PARD3, PARD6A or PARD6B or PARD6G and CDC42 or RAC1. Interacts with ADAP1/CENTA1. Interacts directly with SQSTM1. Forms a ternary complex with SQSTM1 and KCNAB2. Forms another ternary complex with SQSTM1 and GABRR3. Forms a complex with SQSTM1 and MAP2K5. Interacts (via the protein kinase domain) with WWC1. Forms a tripartite complex with WWC1 and DDR1, but predominantly in the absence of collagen. Component of the Par polarity complex, composed of at least phosphorylated PRKCZ, PARD3 and TIAM1. Interacts with PDPK1 (via N-terminal region). Interacts with WDFY2 (via WD repeats 1-3). Interacts with VAMP2. Forms a complex with WDFY2 and VAMP2. Interacts with APPL1. Interacts with WWC1, WWC2 and WWC3. CDH5 is required for its phosphorylation at Thr-409. Phosphorylated by protein kinase PDPK1; phosphorylation is inhibited by the apoptotic C-terminal cleavage product of PKN2. Phosphorylation at Thr-409 by PI3K activates the kinase.

It is found in the cytoplasm. The protein localises to the endosome. Its subcellular location is the cell junction. It localises to the membrane. It catalyses the reaction L-seryl-[protein] + ATP = O-phospho-L-seryl-[protein] + ADP + H(+). The catalysed reaction is L-threonyl-[protein] + ATP = O-phospho-L-threonyl-[protein] + ADP + H(+). With respect to regulation, atypical PKCs (PRKCI and PRKCZ) exhibit an elevated basal enzymatic activity (that may be due to the interaction with SMG1 or SQSTM1) and are not regulated by diacylglycerol, phosphatidylserine, phorbol esters or calcium ions. Two specific sites, Thr-409 (activation loop of the kinase domain) and Thr-559 (turn motif), need to be phosphorylated for its full activation. Phosphatidylinositol 3,4,5-trisphosphate might be a physiological activator. In terms of biological role, calcium- and diacylglycerol-independent serine/threonine-protein kinase that functions in phosphatidylinositol 3-kinase (PI3K) pathway and mitogen-activated protein (MAP) kinase cascade, and is involved in NF-kappa-B activation, mitogenic signaling, cell proliferation, cell polarity, inflammatory response and maintenance of long-term potentiation (LTP). Upon lipopolysaccharide (LPS) treatment in macrophages, or following mitogenic stimuli, functions downstream of PI3K to activate MAP2K1/MEK1-MAPK1/ERK2 signaling cascade independently of RAF1 activation. Required for insulin-dependent activation of AKT3, but may function as an adapter rather than a direct activator. Upon insulin treatment may act as a downstream effector of PI3K and contribute to the activation of translocation of the glucose transporter SLC2A4/GLUT4 and subsequent glucose transport in adipocytes. In EGF-induced cells, binds and activates MAP2K5/MEK5-MAPK7/ERK5 independently of its kinase activity and can activate JUN promoter through MEF2C. Through binding with SQSTM1/p62, functions in interleukin-1 signaling and activation of NF-kappa-B with the specific adapters RIPK1 and TRAF6. Participates in TNF-dependent transactivation of NF-kappa-B by phosphorylating and activating IKBKB kinase, which in turn leads to the degradation of NF-kappa-B inhibitors. In migrating astrocytes, forms a cytoplasmic complex with PARD6A and is recruited by CDC42 to function in the establishment of cell polarity along with the microtubule motor and dynein. In association with FEZ1, stimulates neuronal differentiation in PC12 cells. In the inflammatory response, is required for the T-helper 2 (Th2) differentiation process, including interleukin production, efficient activation of JAK1 and the subsequent phosphorylation and nuclear translocation of STAT6. May be involved in development of allergic airway inflammation (asthma), a process dependent on Th2 immune response. In the NF-kappa-B-mediated inflammatory response, can relieve SETD6-dependent repression of NF-kappa-B target genes by phosphorylating the RELA subunit at 'Ser-311'. Phosphorylates VAMP2 in vitro. Phosphorylates and activates LRRK1, which phosphorylates RAB proteins involved in intracellular trafficking. In Oryctolagus cuniculus (Rabbit), this protein is Protein kinase C zeta type (PRKCZ).